The following is a 229-amino-acid chain: Protein-L-isoaspartate O-methyltransferase (229 aa).

Residue Ser78 is part of the active site.

The protein belongs to the methyltransferase superfamily. L-isoaspartyl/D-aspartyl protein methyltransferase family.

It localises to the cytoplasm. It catalyses the reaction [protein]-L-isoaspartate + S-adenosyl-L-methionine = [protein]-L-isoaspartate alpha-methyl ester + S-adenosyl-L-homocysteine. Catalyzes the methyl esterification of L-isoaspartyl residues in peptides and proteins that result from spontaneous decomposition of normal L-aspartyl and L-asparaginyl residues. It plays a role in the repair and/or degradation of damaged proteins. This chain is Protein-L-isoaspartate O-methyltransferase, found in Chromohalobacter salexigens (strain ATCC BAA-138 / DSM 3043 / CIP 106854 / NCIMB 13768 / 1H11).